The chain runs to 493 residues: Dynein regulatory complex subunit 2 (493 aa).

2 coiled-coil regions span residues 99 to 163 and 253 to 280; these read DSVI…RKLI and KDEK…ILKG.

Belongs to the DRC2 family. As to quaternary structure, component of the nexin-dynein regulatory complex (N-DRC). Interacts with DRC1.

The protein resides in the cytoplasm. It is found in the cytoskeleton. The protein localises to the flagellum basal body. It localises to the cell projection. Its subcellular location is the cilium. The protein resides in the flagellum. It is found in the flagellum axoneme. In terms of biological role, component of the nexin-dynein regulatory complex (N-DRC), a key regulator of ciliary/flagellar motility which maintains the alignment and integrity of the distal axoneme and regulates microtubule sliding in motile axonemes. Plays a critical role in the assembly of N-DRC and also stabilizes the assembly of multiple inner dynein arms and radial spokes. Coassembles with DRC1 to form a central scaffold needed for assembly of the N-DRC and its attachment to the outer doublet microtubules. The chain is Dynein regulatory complex subunit 2 (Ccdc65) from Mus musculus (Mouse).